The chain runs to 131 residues: Large ribosomal subunit protein bL19 (131 aa).

The segment covering Arg-111 to Lys-124 has biased composition (basic and acidic residues). A disordered region spans residues Arg-111–Glu-131.

The protein belongs to the bacterial ribosomal protein bL19 family.

This protein is located at the 30S-50S ribosomal subunit interface and may play a role in the structure and function of the aminoacyl-tRNA binding site. This Methylobacterium nodulans (strain LMG 21967 / CNCM I-2342 / ORS 2060) protein is Large ribosomal subunit protein bL19.